The chain runs to 463 residues: NEDD8-activating enzyme E1 catalytic subunit (463 aa).

A2 is subject to N-acetylalanine. The tract at residues H53 to C70 is interaction with UBE2M N-terminus. ATP-binding positions include D100–K124 and I148–A171. Interaction with UBE2M N-terminus stretches follow at residues R157 to I161 and P192 to M217. An interaction with NEDD8 region spans residues L227–P229. Catalysis depends on C237, which acts as the Glycyl thioester intermediate. Interaction with NAE1 stretches follow at residues M242–H248 and Y292–R295. The segment at I331–P338 is interaction with UBE2M N-terminus. The interval Y352–E357 is interaction with NEDD8. The tract at residues S368–S463 is interaction with UBE2M core domain.

This sequence belongs to the ubiquitin-activating E1 family. UBA3 subfamily. In terms of assembly, heterodimer of UBA3 and NAE1. Interacts with NEDD8, UBE2F and UBE2M. Binds ESR1 and ESR2 with bound steroid ligand. Interacts with TBATA. Ubiquitously expressed.

It carries out the reaction ATP + [NEDD8 protein] + [E1 NEDD8-activating enzyme]-L-cysteine = AMP + diphosphate + [E1 NEDD8-activating enzyme]-S-[NEDD8 protein]-yl-L-cysteine.. It participates in protein modification; protein neddylation. With respect to regulation, binding of TP53BP2 to the regulatory subunit NAE1 decreases activity. In terms of biological role, catalytic subunit of the dimeric UBA3-NAE1 E1 enzyme. E1 activates NEDD8 by first adenylating its C-terminal glycine residue with ATP, thereafter linking this residue to the side chain of the catalytic cysteine, yielding a NEDD8-UBA3 thioester and free AMP. E1 finally transfers NEDD8 to the catalytic cysteine of UBE2M. Down-regulates steroid receptor activity. Necessary for cell cycle progression. This Homo sapiens (Human) protein is NEDD8-activating enzyme E1 catalytic subunit (UBA3).